Here is a 285-residue protein sequence, read N- to C-terminus: GPN-loop GTPase 3 (285 aa).

13 to 18 is a GTP binding site; sequence GSGKST. The Gly-Pro-Asn (GPN)-loop; involved in dimer interface signature appears at 72 to 74; it reads GPN. Position 174-177 (174-177) interacts with GTP; that stretch reads TKMD. The disordered stretch occupies residues 261–285; that stretch reads KEPKENEEDKSENFDEFFQDRADEP. Acidic residues predominate over residues 265-277; sequence ENEEDKSENFDEF.

Belongs to the GPN-loop GTPase family. Heterodimer with gpn1. Binds to RNA polymerase II (RNAPII).

Functionally, small GTPase required for proper localization of RNA polymerase II (RNAPII). May act at an RNAP assembly step prior to nuclear import. The chain is GPN-loop GTPase 3 from Xenopus tropicalis (Western clawed frog).